We begin with the raw amino-acid sequence, 416 residues long: Histidinol dehydrogenase (416 aa).

NAD(+) contacts are provided by Tyr-117, Gln-178, and Asn-201. The substrate site is built by Thr-224, Gln-246, and His-249. 2 residues coordinate Zn(2+): Gln-246 and His-249. Residues Glu-314 and His-315 each act as proton acceptor in the active site. The substrate site is built by His-315, Asp-348, Glu-402, and His-407. Zn(2+) is bound at residue Asp-348. Residue His-407 participates in Zn(2+) binding.

This sequence belongs to the histidinol dehydrogenase family. Zn(2+) serves as cofactor.

The catalysed reaction is L-histidinol + 2 NAD(+) + H2O = L-histidine + 2 NADH + 3 H(+). It functions in the pathway amino-acid biosynthesis; L-histidine biosynthesis; L-histidine from 5-phospho-alpha-D-ribose 1-diphosphate: step 9/9. Functionally, catalyzes the sequential NAD-dependent oxidations of L-histidinol to L-histidinaldehyde and then to L-histidine. This Staphylococcus aureus (strain bovine RF122 / ET3-1) protein is Histidinol dehydrogenase.